The chain runs to 127 residues: Ribosome-binding factor A (127 aa).

The protein belongs to the RbfA family. Monomer. Binds 30S ribosomal subunits, but not 50S ribosomal subunits or 70S ribosomes.

The protein localises to the cytoplasm. Functionally, one of several proteins that assist in the late maturation steps of the functional core of the 30S ribosomal subunit. Associates with free 30S ribosomal subunits (but not with 30S subunits that are part of 70S ribosomes or polysomes). Required for efficient processing of 16S rRNA. May interact with the 5'-terminal helix region of 16S rRNA. The chain is Ribosome-binding factor A from Rickettsia typhi (strain ATCC VR-144 / Wilmington).